An 853-amino-acid chain; its full sequence is WEB family protein At5g16730, chloroplastic (853 aa).

Low complexity-rich tracts occupy residues 1 to 27 and 36 to 49; these read MASK…PATP and KSET…STTT. Residues 1-84 constitute a chloroplast transit peptide; that stretch reads MASKTKTSLS…PTPPEKSQAR (84 aa). 4 disordered regions span residues 1–106, 386–465, 666–765, and 778–820; these read MASK…IKED, KEDL…SKKA, LAKK…SVEV, and KEAF…ALTA. A compositionally biased stretch (polar residues) spans 92 to 101; that stretch reads ESPQTTTRLS. Positions 94-670 form a coiled coil; that stretch reads PQTTTRLSQI…LEEAILAKKQ (577 aa). Composition is skewed to basic and acidic residues over residues 402 to 465, 698 to 718, and 732 to 753; these read EVSK…SKKA, NGHR…HEPP, and MEEK…KKDE. The span at 754–763 shows a compositional bias: acidic residues; it reads SQDDDKDDSV. A compositionally biased stretch (basic and acidic residues) spans 778–788; the sequence is KEAFPDKKSEL. S790 bears the Phosphoserine mark. Positions 797-807 are enriched in basic and acidic residues; that stretch reads SSKIDESDKTS.

It belongs to the WEB family.

Its subcellular location is the plastid. The protein resides in the chloroplast. This Arabidopsis thaliana (Mouse-ear cress) protein is WEB family protein At5g16730, chloroplastic.